Here is a 216-residue protein sequence, read N- to C-terminus: Large ribosomal subunit protein uL1y (216 aa).

It belongs to the universal ribosomal protein uL1 family. In terms of assembly, interacts with the GTPase NUG2.

This chain is Large ribosomal subunit protein uL1y (RPL10AB), found in Arabidopsis thaliana (Mouse-ear cress).